The chain runs to 358 residues: MLDRLQYVKQRFDEISDLIIQPDVISDQKRYKSLNQEYKGIKALVEKREEYIIVLANIDEANEIIADGSDAEMVEMAKMQLDEAKDRLPELEEEIKFMLIPKDPEDAKNVMVEIRAGTGGDEASIFAGDLFRMYTKYCETMGWRTSVVDMNEGTSGGFKEVIFEVTGEDVYGTLKFEAGVHRVQRVPQTETQGRVHTSAATVMVLPEAEEFDVQVDMNDVRVDFFCSSGPGGQSVNTTKSAVRLTHIPTGLVAQCQDEKSQHKNKDKALMVLRSRLYEMELAKKQEEDAKKRSSQVSSGDRSAKIRTYNYAQGRVTDHRVGLTLYDLGNIMNGDIQKIVSELQLVNNMEKLKEASEVY.

The residue at position 233 (Gln233) is an N5-methylglutamine.

This sequence belongs to the prokaryotic/mitochondrial release factor family. Methylated by PrmC. Methylation increases the termination efficiency of RF1.

Its subcellular location is the cytoplasm. Its function is as follows. Peptide chain release factor 1 directs the termination of translation in response to the peptide chain termination codons UAG and UAA. The protein is Peptide chain release factor 1 of Flavobacterium johnsoniae (strain ATCC 17061 / DSM 2064 / JCM 8514 / BCRC 14874 / CCUG 350202 / NBRC 14942 / NCIMB 11054 / UW101) (Cytophaga johnsonae).